A 331-amino-acid chain; its full sequence is Ketol-acid reductoisomerase (NADP(+)) (331 aa).

Residues 2–182 form the KARI N-terminal Rossmann domain; it reads AKMYYDSDCN…GAGRAGILET (181 aa). NADP(+)-binding positions include 25 to 28, Ser51, and 83 to 86; these read YGSQ and DEKQ. The active site involves His108. NADP(+) is bound at residue Gly134. The KARI C-terminal knotted domain occupies 183–329; sequence TFREETETDL…AELRKMMSWL (147 aa). Mg(2+) is bound by residues Asp191, Glu195, Glu227, and Glu231. Substrate is bound at residue Ser252.

This sequence belongs to the ketol-acid reductoisomerase family. The cofactor is Mg(2+).

It carries out the reaction (2R)-2,3-dihydroxy-3-methylbutanoate + NADP(+) = (2S)-2-acetolactate + NADPH + H(+). The catalysed reaction is (2R,3R)-2,3-dihydroxy-3-methylpentanoate + NADP(+) = (S)-2-ethyl-2-hydroxy-3-oxobutanoate + NADPH + H(+). The protein operates within amino-acid biosynthesis; L-isoleucine biosynthesis; L-isoleucine from 2-oxobutanoate: step 2/4. It participates in amino-acid biosynthesis; L-valine biosynthesis; L-valine from pyruvate: step 2/4. Involved in the biosynthesis of branched-chain amino acids (BCAA). Catalyzes an alkyl-migration followed by a ketol-acid reduction of (S)-2-acetolactate (S2AL) to yield (R)-2,3-dihydroxy-isovalerate. In the isomerase reaction, S2AL is rearranged via a Mg-dependent methyl migration to produce 3-hydroxy-3-methyl-2-ketobutyrate (HMKB). In the reductase reaction, this 2-ketoacid undergoes a metal-dependent reduction by NADPH to yield (R)-2,3-dihydroxy-isovalerate. This Ruminiclostridium cellulolyticum (strain ATCC 35319 / DSM 5812 / JCM 6584 / H10) (Clostridium cellulolyticum) protein is Ketol-acid reductoisomerase (NADP(+)).